The chain runs to 96 residues: Large ribosomal subunit protein uL23 (96 aa).

It belongs to the universal ribosomal protein uL23 family. Part of the 50S ribosomal subunit. Contacts protein L29, and trigger factor when it is bound to the ribosome.

One of the early assembly proteins it binds 23S rRNA. One of the proteins that surrounds the polypeptide exit tunnel on the outside of the ribosome. Forms the main docking site for trigger factor binding to the ribosome. The polypeptide is Large ribosomal subunit protein uL23 (Endomicrobium trichonymphae).